A 114-amino-acid chain; its full sequence is Cyclin-dependent kinase 2-associated protein 1 (114 aa).

The segment at 18 to 57 (AGSVHSPSTSMATSSQYRQLLSDYGPPSLGYTQGTGNSQV) is disordered. The segment at 19–24 (GSVHSP) is interaction with CDK2AP2. Residues 20 to 36 (SVHSPSTSMATSSQYRQ) show a composition bias toward polar residues. The residue at position 45 (Ser45) is a Phosphoserine; by IKKE. Over residues 47–57 (GYTQGTGNSQV) the composition is skewed to polar residues.

The protein belongs to the CDK2AP family. In terms of assembly, homodimer. Component of the nucleosome remodeling and deacetylase (NuRD) repressor complex, composed of core proteins MTA1, MTA2, MTA3, RBBP4, RBBP7, HDAC1, HDAC2, MBD2, MBD3, and peripherally associated proteins CDK2AP1, CDK2AP2, GATAD2A, GATAD2B, CHD3, CHD4 and CHD5. The exact stoichiometry of the NuRD complex is unknown, and some subunits such as MBD2 and MBD3, GATAD2A and GATAD2B, and CHD3, CHD4 and CHD5 define mutually exclusive NuRD complexes. Interacts with monomeric unphosphorylated CDK2. Interacts with CDK2AP2. Interacts with GATAD2A. Interacts with HDAC1. Interacts with HDAC2. Interacts with MBD2. Interacts with MBD3. Interacts with RBBP4. Interacts with RBBP7. Post-translationally, phosphorylated in vitro by IKBKE at Ser-45.

The protein localises to the nucleus. Its subcellular location is the chromosome. Inhibitor of cyclin-dependent kinase CDK2. Also acts as a component of the histone deacetylase NuRD complex which participates in the remodeling of chromatin. The polypeptide is Cyclin-dependent kinase 2-associated protein 1 (Cdk2ap1) (Mus musculus (Mouse)).